Here is an 825-residue protein sequence, read N- to C-terminus: Taste receptor cell protein 1 (825 aa).

The signal sequence occupies residues 1-21 (MDKQWFPAAGILLAALLVVSA). Disordered stretches follow at residues 66-97 (EREPEALGRRAGGLSTEGAGGQESPSMPGPSG) and 299-322 (TSPSQASSLHSPRPSSASPLSASP). Positions 302 to 322 (SQASSLHSPRPSSASPLSASP) are enriched in low complexity.

As to expression, expression is restricted to circumvallate papillae.

This is Taste receptor cell protein 1 (Trcg1) from Mus musculus (Mouse).